Here is a 999-residue protein sequence, read N- to C-terminus: Hypoxia up-regulated protein 1 (999 aa).

The signal sequence occupies residues 1 to 32 (MAATVRRQRPRRLLCWALVAVLLADLLALSDT). N155, N222, and N515 each carry an N-linked (GlcNAc...) asparagine glycan. The tract at residues 564–694 (VEDSPEEEST…KKQKPARKQK (131 aa)) is disordered. Residue S567 is modified to Phosphoserine. Residues 574 to 583 (LTKLGNTISS) are compositionally biased toward polar residues. An N-linked (GlcNAc...) asparagine glycan is attached at N596. 2 stretches are compositionally biased toward basic and acidic residues: residues 611–626 (GSKDEPAEQGELKEEA) and 641–668 (PKGDAAREGETPDEKESGDKSEAQKPNE). 3 N-linked (GlcNAc...) asparagine glycosylation sites follow: N830, N862, and N869. At K883 the chain carries N6-acetyllysine. Residues 909–999 (AKFTKPRPRP…QKRPLKNDEL (91 aa)) are disordered. N-linked (GlcNAc...) asparagine glycans are attached at residues N922 and N931. The span at 949-962 (EEAKAILEPDKEGL) shows a compositional bias: basic and acidic residues. The short motif at 996-999 (NDEL) is the Prevents secretion from ER element.

This sequence belongs to the heat shock protein 70 family. In terms of assembly, part of a large chaperone multiprotein complex comprising DNAJB11, HSP90B1, HSPA5, HYOU, PDIA2, PDIA4, PDIA6, PPIB, SDF2L1, UGGT1 and very small amounts of ERP29, but not, or at very low levels, CALR nor CANX. In terms of tissue distribution, selectively expressed by cultured astrocytes but not endothelial cells, microglia or neurons.

It is found in the endoplasmic reticulum lumen. Has a pivotal role in cytoprotective cellular mechanisms triggered by oxygen deprivation. Promotes HSPA5/BiP-mediated ATP nucleotide exchange and thereby activates the unfolded protein response (UPR) pathway in the presence of endoplasmic reticulum stress. May play a role as a molecular chaperone and participate in protein folding. This Rattus norvegicus (Rat) protein is Hypoxia up-regulated protein 1 (Hyou1).